We begin with the raw amino-acid sequence, 293 residues long: Cell division protein FtsQ (293 aa).

At 1–29 (MSQVRSKSQQGKRQAKPQEVVPATILTEQ) the chain is on the cytoplasmic side. A helical membrane pass occupies residues 30 to 52 (LSTYAFGTVTAGAVMVAVAAWMG). Topologically, residues 53–293 (GSLASIDERI…SQIDDKSGGA (241 aa)) are periplasmic. Residues 75–144 (FTVTKISIEG…NDIWILAENR (70 aa)) enclose the POTRA domain.

Belongs to the FtsQ/DivIB family. FtsQ subfamily.

The protein resides in the cell inner membrane. Functionally, essential cell division protein. This chain is Cell division protein FtsQ, found in Hirschia baltica (strain ATCC 49814 / DSM 5838 / IFAM 1418).